The sequence spans 407 residues: Eukaryotic initiation factor 4A-II (407 aa).

The tract at residues 1 to 23 (MSGGSADYSRDHGGPEGMEPDGV) is disordered. The short motif at 33 to 61 (DNFDDMNLKESLLRGIYAYGFEKPSAIQQ) is the Q motif element. The 172-residue stretch at 64-235 (IIPCIKGYDV…KKFMREPIRI (172 aa)) folds into the Helicase ATP-binding domain. 77-84 (AQSGTGKT) lines the ATP pocket. The DEAD box signature appears at 183-186 (DEAD). The region spanning 246–407 (GIKQFYINVE…EMPMNVADLI (162 aa)) is the Helicase C-terminal domain.

The protein belongs to the DEAD box helicase family. eIF4A subfamily. As to quaternary structure, eIF4F is a multi-subunit complex, the composition of which varies with external and internal environmental conditions. It is composed of at least EIF4A, EIF4E and EIF4G1/EIFFG3. Interacts with EIF4E.

It catalyses the reaction ATP + H2O = ADP + phosphate + H(+). In terms of biological role, ATP-dependent RNA helicase which is a subunit of the eIF4F complex involved in cap recognition and is required for mRNA binding to ribosome. In the current model of translation initiation, eIF4A unwinds RNA secondary structures in the 5'-UTR of mRNAs which is necessary to allow efficient binding of the small ribosomal subunit, and subsequent scanning for the initiator codon. This Gallus gallus (Chicken) protein is Eukaryotic initiation factor 4A-II (EIF4A2).